A 625-amino-acid polypeptide reads, in one-letter code: Procollagen galactosyltransferase 2 (625 aa).

The first 26 residues, 1–26 (MAARLATVACALFLLSSALLRLGCRA), serve as a signal peptide directing secretion. Asn-96, Asn-184, Asn-381, and Asn-579 each carry an N-linked (GlcNAc...) asparagine glycan. The tract at residues 597–625 (QGHIRSTAKNTEALPPPTSLDTVPSRDEL) is disordered. A Prevents secretion from ER motif is present at residues 622 to 625 (RDEL).

It belongs to the glycosyltransferase 25 family.

It localises to the endoplasmic reticulum lumen. The catalysed reaction is (5R)-5-hydroxy-L-lysyl-[collagen] + UDP-alpha-D-galactose = (5R)-5-O-(beta-D-galactosyl)-5-hydroxy-L-lysyl-[collagen] + UDP + H(+). Its function is as follows. Beta-galactosyltransferase that transfers beta-galactose to hydroxylysine residues of collagen. In Mus musculus (Mouse), this protein is Procollagen galactosyltransferase 2 (Colgalt2).